Here is a 164-residue protein sequence, read N- to C-terminus: MRLTSKGRYAVTAMLDVALNSEAGPVPLADISERQGISLSYLEQLFSRLRKNGLVSSVRGPGGGYLLGKDAGSIAVGEVISAVDESVDATRCQGKGGCQGGDKCLTHALWRDLSDRLTGFLNNITLGELVNNQEVLDVSGRQHTHDAPRASSRAQDAIDVKLRA.

Positions arginine 2 to asparagine 131 constitute an HTH rrf2-type domain. Positions leucine 28–lysine 51 form a DNA-binding region, H-T-H motif. Positions 92, 98, and 104 each coordinate [2Fe-2S] cluster.

The cofactor is [2Fe-2S] cluster.

Its function is as follows. Regulates the transcription of several operons and genes involved in the biogenesis of Fe-S clusters and Fe-S-containing proteins. This is HTH-type transcriptional regulator IscR from Salmonella agona (strain SL483).